Reading from the N-terminus, the 116-residue chain is NADH dehydrogenase [ubiquinone] 1 alpha subcomplex subunit 5 (116 aa).

The residue at position 2 (alanine 2) is an N-acetylalanine. N6-acetyllysine is present on residues lysine 30, lysine 36, lysine 46, and lysine 60. Phosphoserine is present on serine 89. Lysine 98 is modified (N6-acetyllysine; alternate). Lysine 98 carries the N6-succinyllysine; alternate modification.

This sequence belongs to the complex I NDUFA5 subunit family. Complex I is composed of 45 different subunits. Post-translationally, acetylation of Lys-98 is observed in liver mitochondria from fasted mice but not from fed mice.

It localises to the mitochondrion inner membrane. In terms of biological role, accessory subunit of the mitochondrial membrane respiratory chain NADH dehydrogenase (Complex I), that is believed not to be involved in catalysis. Complex I functions in the transfer of electrons from NADH to the respiratory chain. The immediate electron acceptor for the enzyme is believed to be ubiquinone. This is NADH dehydrogenase [ubiquinone] 1 alpha subcomplex subunit 5 (Ndufa5) from Mus musculus (Mouse).